A 475-amino-acid polypeptide reads, in one-letter code: C3a anaphylatoxin chemotactic receptor (475 aa).

Residues 1 to 23 (MESSSAETNSTGLHLEPQYQPET) lie on the Extracellular side of the membrane. Asparagine 9 is a glycosylation site (N-linked (GlcNAc...) asparagine). Residues 24 to 46 (ILAMAILGLTFVLGLPGNGLVLW) traverse the membrane as a helical segment. Residues 47–57 (VAGLKMRRTVN) are Cytoplasmic-facing. A helical membrane pass occupies residues 58-80 (TVWFLHLTVADFVCCLSLPFSMA). Residues 81-96 (HLALRGYWPYGEILCK) lie on the Extracellular side of the membrane. The cysteines at positions 95 and 172 are disulfide-linked. The helical transmembrane segment at 97-118 (FIPTVIIFNMFASVFLLTAISL) threads the bilayer. At 119–139 (DRCLMVLKPIWCQNHRNVRTA) the chain is on the cytoplasmic side. The chain crosses the membrane as a helical span at residues 140 to 160 (CIICGCIWLVAFVLCIPVFVY). The Extracellular portion of the chain corresponds to 161–331 (RETFTLENHT…RLLKVITFTR (171 aa)). Asparagine 168 is a glycosylation site (N-linked (GlcNAc...) asparagine). 2 positions are modified to sulfotyrosine: tyrosine 174 and tyrosine 183. Residues asparagine 273 and asparagine 292 are each glycosylated (N-linked (GlcNAc...) asparagine). Residues 332–351 (LVVGFLLPMIIMVACYTLII) traverse the membrane as a helical segment. Over 352–368 (FRMRRVRVVKSWNKALH) the chain is Cytoplasmic. The chain crosses the membrane as a helical span at residues 369-391 (LAMVVVTIFLICWAPYHVFGVLI). Residues 392–408 (LFINPESRVGAALLSWD) lie on the Extracellular side of the membrane. Residues 409–429 (HVSIALASANSCFNPFLYALL) form a helical membrane-spanning segment. The Cytoplasmic portion of the chain corresponds to 430–475 (GRDLRKRVRQSMKGILEAAFSEDISKSTSFIQAKAFSEKHSLSTNV). Serine 450 is subject to Phosphoserine.

It belongs to the G-protein coupled receptor 1 family. As to quaternary structure, interacts with VGF-derived peptide TLQP-21. As to expression, expressed in the heart, kidney, lung, liver, peritoneal macrophages and spleen.

It localises to the cell membrane. In terms of biological role, receptor for the chemotactic and inflammatory peptide anaphylatoxin C3a. This receptor stimulates chemotaxis, granule enzyme release and superoxide anion production. In Cavia porcellus (Guinea pig), this protein is C3a anaphylatoxin chemotactic receptor (C3AR1).